A 114-amino-acid chain; its full sequence is Large ribosomal subunit protein uL22 (114 aa).

This sequence belongs to the universal ribosomal protein uL22 family. In terms of assembly, part of the 50S ribosomal subunit.

Its function is as follows. This protein binds specifically to 23S rRNA; its binding is stimulated by other ribosomal proteins, e.g. L4, L17, and L20. It is important during the early stages of 50S assembly. It makes multiple contacts with different domains of the 23S rRNA in the assembled 50S subunit and ribosome. The globular domain of the protein is located near the polypeptide exit tunnel on the outside of the subunit, while an extended beta-hairpin is found that lines the wall of the exit tunnel in the center of the 70S ribosome. This is Large ribosomal subunit protein uL22 from Desulfitobacterium hafniense (strain DSM 10664 / DCB-2).